The primary structure comprises 280 residues: Ribosomal protein L11 methyltransferase (280 aa).

Residues Thr-131, Gly-152, Asp-174, and Asn-217 each coordinate S-adenosyl-L-methionine.

The protein belongs to the methyltransferase superfamily. PrmA family.

The protein localises to the cytoplasm. The enzyme catalyses L-lysyl-[protein] + 3 S-adenosyl-L-methionine = N(6),N(6),N(6)-trimethyl-L-lysyl-[protein] + 3 S-adenosyl-L-homocysteine + 3 H(+). Its function is as follows. Methylates ribosomal protein L11. The sequence is that of Ribosomal protein L11 methyltransferase from Bacteroides thetaiotaomicron (strain ATCC 29148 / DSM 2079 / JCM 5827 / CCUG 10774 / NCTC 10582 / VPI-5482 / E50).